Consider the following 518-residue polypeptide: Putative beta-xylosidase (518 aa).

Catalysis depends on D47, which acts as the Proton acceptor. E203 acts as the Proton donor in catalysis.

The protein belongs to the glycosyl hydrolase 43 family.

It catalyses the reaction Hydrolysis of (1-&gt;4)-beta-D-xylans, to remove successive D-xylose residues from the non-reducing termini.. The sequence is that of Putative beta-xylosidase from Xylanibacter ruminicola (Prevotella ruminicola).